Reading from the N-terminus, the 579-residue chain is Putative truncated flagellar export/assembly protein LfhA (579 aa).

Helical transmembrane passes span 86-106, 124-144, and 177-197; these read AIAG…IGIF, IGDG…AAII, and FVLA…SALL.

This sequence belongs to the FHIPEP (flagella/HR/invasion proteins export pore) family.

Its subcellular location is the cell inner membrane. The sequence is that of Putative truncated flagellar export/assembly protein LfhA from Escherichia coli (strain K12).